The primary structure comprises 72 residues: Large ribosomal subunit protein eL40 (72 aa).

Belongs to the eukaryotic ribosomal protein eL40 family.

In Nicotiana tabacum (Common tobacco), this protein is Large ribosomal subunit protein eL40.